Consider the following 814-residue polypeptide: Phenylalanine--tRNA ligase beta subunit (814 aa).

In terms of domain architecture, tRNA-binding spans 39–153 (SARAKGVVVG…ELPALGAPVA (115 aa)). One can recognise a B5 domain in the interval 414–498 (ADASSVLLRR…RLVGFDRFGA (85 aa)). Residues Asp-476, Asp-482, Glu-485, and Glu-486 each coordinate Mg(2+). Residues 720 to 813 (PTVPASERDL…LVKQHGAELR (94 aa)) enclose the FDX-ACB domain.

It belongs to the phenylalanyl-tRNA synthetase beta subunit family. Type 1 subfamily. Tetramer of two alpha and two beta subunits. It depends on Mg(2+) as a cofactor.

Its subcellular location is the cytoplasm. The enzyme catalyses tRNA(Phe) + L-phenylalanine + ATP = L-phenylalanyl-tRNA(Phe) + AMP + diphosphate + H(+). This Parasynechococcus marenigrum (strain WH8102) protein is Phenylalanine--tRNA ligase beta subunit.